A 221-amino-acid polypeptide reads, in one-letter code: Tumor protein p53-inducible nuclear protein 2 (221 aa).

Positions 26-41 (VSEEDEVDGWLIIDLQ) match the LIR motif. Residues 41–68 (QDSYTAPPDPGASPAPAGRPPPAPSLMD) form a disordered region. Pro residues predominate over residues 47-64 (PPDPGASPAPAGRPPPAP). Residue Ser-136 is modified to Phosphoserine. A disordered region spans residues 177-210 (RQRAERHTLSAKVLQRQNRARESRSRRPKHQGSF).

As to quaternary structure, interacts with VMP1, GABARAP, GABARAPL1, GABARAPL2, MAP1LC3A, MAP1LC3B, MAP1LC3C and THRA.

It localises to the cytoplasm. Its subcellular location is the cytosol. The protein localises to the nucleus. It is found in the PML body. The protein resides in the cytoplasmic vesicle. It localises to the autophagosome. Its function is as follows. Dual regulator of transcription and autophagy. Positively regulates autophagy and is required for autophagosome formation and processing. May act as a scaffold protein that recruits MAP1LC3A, GABARAP and GABARAPL2 and brings them to the autophagosome membrane by interacting with VMP1 where, in cooperation with the BECN1-PI3-kinase class III complex, they trigger autophagosome development. Acts as a transcriptional activator of THRA. The protein is Tumor protein p53-inducible nuclear protein 2 (Tp53inp2) of Mus musculus (Mouse).